The primary structure comprises 231 residues: Two-component response regulator ORR1 (231 aa).

One can recognise a Response regulatory domain in the interval 9–135; it reads RVLLVDDSPV…DVQRLRNCSP (127 aa). The residue at position 68 (D68) is a 4-aspartylphosphate.

It belongs to the ARR family. Type-A subfamily. Two-component system major event consists of a His-to-Asp phosphorelay between a sensor histidine kinase (HK) and a response regulator (RR). In plants, the His-to-Asp phosphorelay involves an additional intermediate named Histidine-containing phosphotransfer protein (HPt). This multistep phosphorelay consists of a His-Asp-His-Asp sequential transfer of a phosphate group between first a His and an Asp of the HK protein, followed by the transfer to a conserved His of the HPt protein and finally the transfer to an Asp in the receiver domain of the RR protein. In terms of tissue distribution, expressed in roots, leaf blades, leaf sheaths, shoot apex, flowers and panicles.

Functionally, functions as a response regulator involved in His-to-Asp phosphorelay signal transduction system. Phosphorylation of the Asp residue in the receiver domain activates the ability of the protein to promote the transcription of target genes. Type-A response regulators seem to act as negative regulators of the cytokinin signaling. Involved in adventitious (crown) root initiation under the regulation of CRL5. The protein is Two-component response regulator ORR1 of Oryza sativa subsp. japonica (Rice).